The primary structure comprises 476 residues: Lactate utilization protein B (476 aa).

4Fe-4S ferredoxin-type domains lie at 304–334 (GTEFQPVLQCIRCAACVNVCPVYRHIGGHSY) and 353–382 (YDDYKELPYASSLCAACTEACPVKIPLHEL). [4Fe-4S] cluster-binding residues include cysteine 313, cysteine 316, cysteine 319, cysteine 323, cysteine 366, cysteine 369, and cysteine 373. Residues 440–476 (KGPGPLKAWTESREFPAPSKERFRDWFQTRQKGGNPS) are disordered. The span at 449–466 (TESREFPAPSKERFRDWF) shows a compositional bias: basic and acidic residues. Positions 467–476 (QTRQKGGNPS) are enriched in polar residues.

This sequence belongs to the LutB/YkgF family.

In terms of biological role, is involved in L-lactate degradation and allows cells to grow with lactate as the sole carbon source. Has probably a role as an electron transporter during oxidation of L-lactate. The protein is Lactate utilization protein B of Geobacillus kaustophilus (strain HTA426).